We begin with the raw amino-acid sequence, 459 residues long: ATP-dependent protease ATPase subunit HslU (459 aa).

ATP-binding positions include Val-18, 60–65 (GVGKTE), Asp-272, Glu-337, and Arg-409.

The protein belongs to the ClpX chaperone family. HslU subfamily. A double ring-shaped homohexamer of HslV is capped on each side by a ring-shaped HslU homohexamer. The assembly of the HslU/HslV complex is dependent on binding of ATP.

Its subcellular location is the cytoplasm. ATPase subunit of a proteasome-like degradation complex; this subunit has chaperone activity. The binding of ATP and its subsequent hydrolysis by HslU are essential for unfolding of protein substrates subsequently hydrolyzed by HslV. HslU recognizes the N-terminal part of its protein substrates and unfolds these before they are guided to HslV for hydrolysis. This chain is ATP-dependent protease ATPase subunit HslU, found in Thermoanaerobacter sp. (strain X514).